The sequence spans 233 residues: 5'-methylthioadenosine/S-adenosylhomocysteine nucleosidase (233 aa).

The active-site Proton acceptor is Glu-12. Substrate contacts are provided by residues Gly-78, Ile-152, and 173-174 (ME). Asp-197 acts as the Proton donor in catalysis.

It belongs to the PNP/UDP phosphorylase family. MtnN subfamily. Homodimer.

The catalysed reaction is S-adenosyl-L-homocysteine + H2O = S-(5-deoxy-D-ribos-5-yl)-L-homocysteine + adenine. It carries out the reaction S-methyl-5'-thioadenosine + H2O = 5-(methylsulfanyl)-D-ribose + adenine. The enzyme catalyses 5'-deoxyadenosine + H2O = 5-deoxy-D-ribose + adenine. The protein operates within amino-acid biosynthesis; L-methionine biosynthesis via salvage pathway; S-methyl-5-thio-alpha-D-ribose 1-phosphate from S-methyl-5'-thioadenosine (hydrolase route): step 1/2. Functionally, catalyzes the irreversible cleavage of the glycosidic bond in both 5'-methylthioadenosine (MTA) and S-adenosylhomocysteine (SAH/AdoHcy) to adenine and the corresponding thioribose, 5'-methylthioribose and S-ribosylhomocysteine, respectively. Also cleaves 5'-deoxyadenosine, a toxic by-product of radical S-adenosylmethionine (SAM) enzymes, into 5-deoxyribose and adenine. Thus, is required for in vivo function of the radical SAM enzymes biotin synthase and lipoic acid synthase, that are inhibited by 5'-deoxyadenosine accumulation. This chain is 5'-methylthioadenosine/S-adenosylhomocysteine nucleosidase, found in Yersinia pseudotuberculosis serotype O:1b (strain IP 31758).